A 247-amino-acid chain; its full sequence is Cobalt transport protein CbiM (247 aa).

The N-terminal stretch at 1–21 (MVGWGVLILLMVLWLPRQAYA) is a signal peptide. 7 helical membrane passes run 27–47 (GYLPLGWCLFWAALCLPALIL), 64–84 (LVLALSAAFAFVLSALKLPSV), 96–116 (LGAVLFGPMAMSVVGCIILLF), 119–139 (LLLAHGGITTLGANTFSMAVV), 159–179 (GVAVFLAAALGDLSTYLTTSL), 181–201 (LALAFPAPIGGVASSFWKFAS), and 202–222 (IFAVTQVPLAVSEGLLTVIMV).

Belongs to the CbiM family. In terms of assembly, forms an energy-coupling factor (ECF) transporter complex composed of an ATP-binding protein (A component, CbiO), a transmembrane protein (T component, CbiQ) and 2 possible substrate-capture proteins (S components, CbiM and CbiN) of unknown stoichimetry.

It is found in the cell membrane. It functions in the pathway cofactor biosynthesis; adenosylcobalamin biosynthesis. Its function is as follows. Part of the energy-coupling factor (ECF) transporter complex CbiMNOQ involved in cobalt import. This Kyrpidia tusciae (strain DSM 2912 / NBRC 15312 / T2) (Bacillus tusciae) protein is Cobalt transport protein CbiM.